The chain runs to 336 residues: Phosphate acyltransferase (336 aa).

The protein belongs to the PlsX family. In terms of assembly, homodimer. Probably interacts with PlsY.

It is found in the cytoplasm. It carries out the reaction a fatty acyl-[ACP] + phosphate = an acyl phosphate + holo-[ACP]. Its pathway is lipid metabolism; phospholipid metabolism. Catalyzes the reversible formation of acyl-phosphate (acyl-PO(4)) from acyl-[acyl-carrier-protein] (acyl-ACP). This enzyme utilizes acyl-ACP as fatty acyl donor, but not acyl-CoA. In Dictyoglomus thermophilum (strain ATCC 35947 / DSM 3960 / H-6-12), this protein is Phosphate acyltransferase.